The following is a 197-amino-acid chain: Thymidine kinase (197 aa).

Residues 15–22 (GPMFAGKT) and 93–96 (DEVQ) each bind ATP. Glu94 (proton acceptor) is an active-site residue. Zn(2+) is bound by residues Cys150, Cys153, Cys188, and His191.

Belongs to the thymidine kinase family. Homotetramer.

It is found in the cytoplasm. It catalyses the reaction thymidine + ATP = dTMP + ADP + H(+). The chain is Thymidine kinase from Thermococcus kodakarensis (strain ATCC BAA-918 / JCM 12380 / KOD1) (Pyrococcus kodakaraensis (strain KOD1)).